We begin with the raw amino-acid sequence, 283 residues long: tRNA pseudouridine synthase A (283 aa).

The Nucleophile role is filled by D52. Residue Y148 participates in substrate binding.

The protein belongs to the tRNA pseudouridine synthase TruA family. As to quaternary structure, homodimer.

It catalyses the reaction uridine(38/39/40) in tRNA = pseudouridine(38/39/40) in tRNA. Formation of pseudouridine at positions 38, 39 and 40 in the anticodon stem and loop of transfer RNAs. In Orientia tsutsugamushi (strain Ikeda) (Rickettsia tsutsugamushi), this protein is tRNA pseudouridine synthase A.